A 310-amino-acid polypeptide reads, in one-letter code: Tryptophan 2,3-dioxygenase (310 aa).

The tract at residues 1 to 36 (MQPPGEDAPAGCPFSGARAAHSAPAAPAAHEASHVP) is disordered. Residues 15-36 (SGARAAHSAPAAPAAHEASHVP) are compositionally biased toward low complexity. Residues 79 to 83 (FIIQH), Tyr141, and Arg145 contribute to the substrate site. His268 provides a ligand contact to heme. Residue Thr282 coordinates substrate.

It belongs to the tryptophan 2,3-dioxygenase family. In terms of assembly, homotetramer. The cofactor is heme.

It carries out the reaction L-tryptophan + O2 = N-formyl-L-kynurenine. It functions in the pathway amino-acid degradation; L-tryptophan degradation via kynurenine pathway; L-kynurenine from L-tryptophan: step 1/2. In terms of biological role, heme-dependent dioxygenase that catalyzes the oxidative cleavage of the L-tryptophan (L-Trp) pyrrole ring and converts L-tryptophan to N-formyl-L-kynurenine. Catalyzes the oxidative cleavage of the indole moiety. The sequence is that of Tryptophan 2,3-dioxygenase from Burkholderia lata (strain ATCC 17760 / DSM 23089 / LMG 22485 / NCIMB 9086 / R18194 / 383).